Consider the following 315-residue polypeptide: Methionyl-tRNA formyltransferase (315 aa).

Position 113-116 (Ser-113–Pro-116) interacts with (6S)-5,6,7,8-tetrahydrofolate.

Belongs to the Fmt family.

It catalyses the reaction L-methionyl-tRNA(fMet) + (6R)-10-formyltetrahydrofolate = N-formyl-L-methionyl-tRNA(fMet) + (6S)-5,6,7,8-tetrahydrofolate + H(+). In terms of biological role, attaches a formyl group to the free amino group of methionyl-tRNA(fMet). The formyl group appears to play a dual role in the initiator identity of N-formylmethionyl-tRNA by promoting its recognition by IF2 and preventing the misappropriation of this tRNA by the elongation apparatus. This is Methionyl-tRNA formyltransferase from Shigella boydii serotype 4 (strain Sb227).